We begin with the raw amino-acid sequence, 273 residues long: Dermonecrotic toxin LafSicTox-betaIE1 (273 aa).

Residue His-5 is part of the active site. Residues Glu-25 and Asp-27 each coordinate Mg(2+). The Nucleophile role is filled by His-41. Intrachain disulfides connect Cys-45/Cys-51 and Cys-47/Cys-189. Asp-85 serves as a coordination point for Mg(2+). Residue Asn-250 is glycosylated (N-linked (GlcNAc...) asparagine).

It belongs to the arthropod phospholipase D family. Class II subfamily. Mg(2+) is required as a cofactor. Expressed by the venom gland.

Its subcellular location is the secreted. The catalysed reaction is an N-(acyl)-sphingosylphosphocholine = an N-(acyl)-sphingosyl-1,3-cyclic phosphate + choline. It catalyses the reaction an N-(acyl)-sphingosylphosphoethanolamine = an N-(acyl)-sphingosyl-1,3-cyclic phosphate + ethanolamine. The enzyme catalyses a 1-acyl-sn-glycero-3-phosphocholine = a 1-acyl-sn-glycero-2,3-cyclic phosphate + choline. It carries out the reaction a 1-acyl-sn-glycero-3-phosphoethanolamine = a 1-acyl-sn-glycero-2,3-cyclic phosphate + ethanolamine. Its function is as follows. Dermonecrotic toxins cleave the phosphodiester linkage between the phosphate and headgroup of certain phospholipids (sphingolipid and lysolipid substrates), forming an alcohol (often choline) and a cyclic phosphate. This toxin acts on sphingomyelin (SM). It may also act on ceramide phosphoethanolamine (CPE), lysophosphatidylcholine (LPC) and lysophosphatidylethanolamine (LPE), but not on lysophosphatidylserine (LPS), and lysophosphatidylglycerol (LPG). It acts by transphosphatidylation, releasing exclusively cyclic phosphate products as second products. Induces dermonecrosis, hemolysis, increased vascular permeability, edema, inflammatory response, and platelet aggregation. In Loxosceles aff. spinulosa (strain GJB-2008) (Recluse spider), this protein is Dermonecrotic toxin LafSicTox-betaIE1.